The following is a 374-amino-acid chain: UDP-N-acetylglucosamine--N-acetylmuramyl-(pentapeptide) pyrophosphoryl-undecaprenol N-acetylglucosamine transferase (374 aa).

Residues 13 to 15 (TGG), asparagine 124, arginine 165, serine 193, and glutamine 294 contribute to the UDP-N-acetyl-alpha-D-glucosamine site.

The protein belongs to the glycosyltransferase 28 family. MurG subfamily.

The protein localises to the cell inner membrane. It catalyses the reaction di-trans,octa-cis-undecaprenyl diphospho-N-acetyl-alpha-D-muramoyl-L-alanyl-D-glutamyl-meso-2,6-diaminopimeloyl-D-alanyl-D-alanine + UDP-N-acetyl-alpha-D-glucosamine = di-trans,octa-cis-undecaprenyl diphospho-[N-acetyl-alpha-D-glucosaminyl-(1-&gt;4)]-N-acetyl-alpha-D-muramoyl-L-alanyl-D-glutamyl-meso-2,6-diaminopimeloyl-D-alanyl-D-alanine + UDP + H(+). It functions in the pathway cell wall biogenesis; peptidoglycan biosynthesis. Its function is as follows. Cell wall formation. Catalyzes the transfer of a GlcNAc subunit on undecaprenyl-pyrophosphoryl-MurNAc-pentapeptide (lipid intermediate I) to form undecaprenyl-pyrophosphoryl-MurNAc-(pentapeptide)GlcNAc (lipid intermediate II). The sequence is that of UDP-N-acetylglucosamine--N-acetylmuramyl-(pentapeptide) pyrophosphoryl-undecaprenol N-acetylglucosamine transferase from Rhizobium johnstonii (strain DSM 114642 / LMG 32736 / 3841) (Rhizobium leguminosarum bv. viciae).